The following is a 76-amino-acid chain: Omega-conotoxin-like TxMKLT1-0211 (76 aa).

Residues 1–22 (MKLTCMMIVAVLFLTAWTFVTA) form the signal peptide. Residues 23 to 52 (VPHSSNALENLYLKAHHEMNNPEDSELNKR) constitute a propeptide that is removed on maturation. 3 disulfide bridges follow: Cys-53-Cys-67, Cys-60-Cys-71, and Cys-66-Cys-75.

The protein belongs to the conotoxin O1 superfamily. Expressed by the venom duct.

The protein resides in the secreted. Its function is as follows. Omega-conotoxins act at presynaptic membranes, they bind and block voltage-gated calcium channels (Cav). The sequence is that of Omega-conotoxin-like TxMKLT1-0211 from Conus textile (Cloth-of-gold cone).